A 305-amino-acid polypeptide reads, in one-letter code: GS homeobox 2 (305 aa).

2 disordered regions span residues 115–151 (DAQF…AAAA) and 259–305 (KKEG…ISPL). The segment covering 123–140 (SHAHHHHHPPQHHHHHHQ) has biased composition (basic residues). The segment covering 141 to 151 (PQQPGSAAAAA) has biased composition (low complexity). Positions 203 to 262 (GKRMRTAFTSTQLLELEREFSSNMYLSRLRRIEIATYLNLSEKQVKIWFQNRRVKHKKEG) form a DNA-binding region, homeobox.

The protein belongs to the Antp homeobox family.

The protein resides in the nucleus. Functionally, transcription factor that binds 5'-CNAATTAG-3' DNA sequence and regulates the expression of numerous genes including genes important for brain development. During telencephalic development, causes ventralization of pallial progenitors and, depending on the developmental stage, specifies different neuronal fates. At early stages, necessary and sufficient to correctly specify the ventral lateral ganglionic eminence (LGE) and its major derivatives, the striatal projection neurons. At later stages, may specify LGE progenitors toward dorsal LGE fates, including olfactory bulb interneurons. The protein is GS homeobox 2 (Gsx2) of Mus musculus (Mouse).